Consider the following 355-residue polypeptide: UDP-N-acetylglucosamine--N-acetylmuramyl-(pentapeptide) pyrophosphoryl-undecaprenol N-acetylglucosamine transferase (355 aa).

UDP-N-acetyl-alpha-D-glucosamine is bound by residues Thr-15–Gly-17, Asn-127, Arg-163, Ser-191, Ile-244, Ala-263–Glu-268, and Gln-288.

Belongs to the glycosyltransferase 28 family. MurG subfamily.

It is found in the cell inner membrane. The enzyme catalyses di-trans,octa-cis-undecaprenyl diphospho-N-acetyl-alpha-D-muramoyl-L-alanyl-D-glutamyl-meso-2,6-diaminopimeloyl-D-alanyl-D-alanine + UDP-N-acetyl-alpha-D-glucosamine = di-trans,octa-cis-undecaprenyl diphospho-[N-acetyl-alpha-D-glucosaminyl-(1-&gt;4)]-N-acetyl-alpha-D-muramoyl-L-alanyl-D-glutamyl-meso-2,6-diaminopimeloyl-D-alanyl-D-alanine + UDP + H(+). It functions in the pathway cell wall biogenesis; peptidoglycan biosynthesis. In terms of biological role, cell wall formation. Catalyzes the transfer of a GlcNAc subunit on undecaprenyl-pyrophosphoryl-MurNAc-pentapeptide (lipid intermediate I) to form undecaprenyl-pyrophosphoryl-MurNAc-(pentapeptide)GlcNAc (lipid intermediate II). This chain is UDP-N-acetylglucosamine--N-acetylmuramyl-(pentapeptide) pyrophosphoryl-undecaprenol N-acetylglucosamine transferase, found in Salmonella newport (strain SL254).